A 22-amino-acid polypeptide reads, in one-letter code: thr operon leader peptide (22 aa).

It belongs to the thr operon leader peptide family.

Functionally, this protein is involved in control of the biosynthesis of threonine. This Yersinia enterocolitica serotype O:8 / biotype 1B (strain NCTC 13174 / 8081) protein is thr operon leader peptide.